Reading from the N-terminus, the 157-residue chain is MRIGHGYDVHRFGEGDFITLGGVRIPHKFGLVAHSDGDVLLHALSDALLGAVALGDIGKHFPDTDPTFKGADSRALLRHVMSLVRGKGYAVGNVDATIIAQAPKMAPHIQSMRERIAEDLGVELDQVNVKATTTEKLGFTGREEGIAVHAVALLVKA.

2 residues coordinate a divalent metal cation: Asp-8 and His-10. Residues 8–10 (DVH) and 34–35 (HS) each bind 4-CDP-2-C-methyl-D-erythritol 2-phosphate. His-42 is a binding site for a divalent metal cation. 4-CDP-2-C-methyl-D-erythritol 2-phosphate contacts are provided by residues 56-58 (DIG), 61-65 (FPDTD), 100-106 (AQAPKMA), 132-135 (TTTE), Phe-139, and Arg-142.

It belongs to the IspF family. In terms of assembly, homotrimer. Requires a divalent metal cation as cofactor.

The catalysed reaction is 4-CDP-2-C-methyl-D-erythritol 2-phosphate = 2-C-methyl-D-erythritol 2,4-cyclic diphosphate + CMP. The protein operates within isoprenoid biosynthesis; isopentenyl diphosphate biosynthesis via DXP pathway; isopentenyl diphosphate from 1-deoxy-D-xylulose 5-phosphate: step 4/6. Its function is as follows. Involved in the biosynthesis of isopentenyl diphosphate (IPP) and dimethylallyl diphosphate (DMAPP), two major building blocks of isoprenoid compounds. Catalyzes the conversion of 4-diphosphocytidyl-2-C-methyl-D-erythritol 2-phosphate (CDP-ME2P) to 2-C-methyl-D-erythritol 2,4-cyclodiphosphate (ME-CPP) with a corresponding release of cytidine 5-monophosphate (CMP). This is 2-C-methyl-D-erythritol 2,4-cyclodiphosphate synthase from Ectopseudomonas mendocina (strain ymp) (Pseudomonas mendocina).